Consider the following 555-residue polypeptide: Bifunctional epoxide hydrolase 2 (555 aa).

A phosphatase region spans residues 1–224 (MALRAAVFDL…KVTGVQLLQT (224 aa)). Aspartate 9 and aspartate 11 together coordinate Mg(2+). At lysine 43 the chain carries N6-acetyllysine. 123-124 (TN) serves as a coordination point for phosphate. Mg(2+) is bound at residue aspartate 185. N6-acetyllysine occurs at positions 191 and 215. The segment at 235–555 (SALSHGYVLI…ARNPLVDSKL (321 aa)) is epoxide hydrolase. The 273-residue stretch at 259 to 531 (PAVCLCHGFP…CGHWTQIDKP (273 aa)) folds into the AB hydrolase-1 domain. Aspartate 335 (nucleophile) is an active-site residue. Serine 370 carries the post-translational modification Phosphoserine. Residue tyrosine 383 coordinates substrate. Position 455 is an N6-succinyllysine (lysine 455). Residue tyrosine 466 is the Proton donor of the active site. Residue lysine 505 is modified to N6-succinyllysine. Residue cysteine 522 is the site of S-(15-deoxy-Delta12,14-prostaglandin J2-9-yl)cysteine attachment. Histidine 524 functions as the Proton acceptor in the catalytic mechanism. The Microbody targeting signal motif lies at 553–555 (SKL). The residue at position 554 (lysine 554) is an N6-succinyllysine.

The protein belongs to the AB hydrolase superfamily. Epoxide hydrolase family. Homodimer. Requires Mg(2+) as cofactor. Post-translationally, the covalent modification of cysteine by 15-deoxy-Delta12,14-prostaglandin-J2 is autocatalytic and reversible. It may occur as an alternative to other cysteine modifications, such as S-nitrosylation and S-palmitoylation.

Its subcellular location is the cytoplasm. The protein resides in the peroxisome. The enzyme catalyses an epoxide + H2O = an ethanediol. The catalysed reaction is (9S,10S)-10-hydroxy-9-(phosphooxy)octadecanoate + H2O = (9S,10S)-9,10-dihydroxyoctadecanoate + phosphate. It carries out the reaction (14R,15S)-epoxy-(5Z,8Z,11Z)-eicosatrienoate + H2O = (14R,15R)-dihydroxy-(5Z,8Z,11Z)-eicosatrienoate. Inhibited by 1-(1-acetylpiperidin-4-yl)-3-(4-(trifl uoromethoxy)phenyl)urea (TPAU), 1-cyclohexyl-3-dodecylurea (CDU), 12-(3-adamantan-1-yl-ureido)-dodecanoic acid (AUDA), 1-((3S, 5S, 7S)-adamantan-1-yl)-3-(5-(2-(2-ethoxyethoxy) ethoxy)pentyl)urea (AEPU), N-adamantyl-N[']-cyclohexyl urea (ACU), 4-(((1S, 4S)-4-(3-((3S, 5S, 7S)-adamantan-1-yl) ureido)cyclohexyl)oxy)benzoic acid (c-AUCB), 4-(((1R, 4R)-4-(3-((3S, 5S, 7S)-adamantan-1-yl)ureido)cyclohexyl)oxy)benzoic acid (t-AUCB), 4-(((1R, 4R)-4-(3-(4(trifluoromethoxy)phenyl)ureido)cyclohexyl)oxy)benzoic acid (t-TAUCB) and to a lesser extent by 8-(3-((3S, 5S, 7S)-adamantan-1-yl)ureido) octanoic acid (AUOA). In terms of biological role, bifunctional enzyme. The C-terminal domain has epoxide hydrolase activity and acts on epoxides (alkene oxides, oxiranes) and arene oxides. Plays a role in xenobiotic metabolism by degrading potentially toxic epoxides. Also determines steady-state levels of physiological mediators. The N-terminal domain has lipid phosphatase activity, with the highest activity towards threo-9,10-phosphonooxy-hydroxy-octadecanoic acid, followed by erythro-9,10-phosphonooxy-hydroxy-octadecanoic acid, 12-phosphonooxy-octadec-9Z-enoic acid and 12-phosphonooxy-octadec-9E-enoic acid. The chain is Bifunctional epoxide hydrolase 2 (EPHX2) from Sus scrofa (Pig).